Here is a 195-residue protein sequence, read N- to C-terminus: MVNGRIPSVFSKTYVTPRRPYEKARLDQELKIIGEYGLRNKREVWRVKYALAKIRKAARELLTLDEKDEKRLFQGNALLRRLVRIGVLDESRMKLDYVLGLKIEDFLERRLQTQVFKLGLAKSIHHARVLIRQRHIRVRKQVVNIPSFVVRLDSQKHIDFSLKSPFGGGRPGRVKRKNLKKNQGGGGGAAEEEED.

Residues 109–183 (RRLQTQVFKL…VKRKNLKKNQ (75 aa)) enclose the S4 RNA-binding domain. The interval 165-195 (PFGGGRPGRVKRKNLKKNQGGGGGAAEEEED) is disordered.

This sequence belongs to the universal ribosomal protein uS4 family. Component of the small ribosomal subunit. Identified in a IGF2BP1-dependent mRNP granule complex containing untranslated mRNAs. Part of the small subunit (SSU) processome, composed of more than 70 proteins and the RNA chaperone small nucleolar RNA (snoRNA) U3.

The protein resides in the cytoplasm. It is found in the nucleus. Its subcellular location is the nucleolus. Functionally, component of the small ribosomal subunit. The ribosome is a large ribonucleoprotein complex responsible for the synthesis of proteins in the cell. Part of the small subunit (SSU) processome, first precursor of the small eukaryotic ribosomal subunit. During the assembly of the SSU processome in the nucleolus, many ribosome biogenesis factors, an RNA chaperone and ribosomal proteins associate with the nascent pre-rRNA and work in concert to generate RNA folding, modifications, rearrangements and cleavage as well as targeted degradation of pre-ribosomal RNA by the RNA exosome. This chain is Small ribosomal subunit protein uS4, found in Drosophila melanogaster (Fruit fly).